Consider the following 383-residue polypeptide: Peroxisomal membrane protein PEX15 (383 aa).

The Cytoplasmic segment spans residues 1–331 (MAASEIMNNL…AVLKHHFTRS (331 aa)). Residues 332–349 (VLNKNGLLLTGLLLLLCL) traverse the membrane as a helical segment. Residues 350-383 (KKYKSLMAIFKHVPAAFHTVYPQIVGLLKLLASI) are Lumenal-facing.

Interacts with PEX6. Interacts with PEX19; targets PEX15 to the peroxisome. Post-translationally, phosphorylated.

Its subcellular location is the peroxisome membrane. The protein localises to the endoplasmic reticulum membrane. Peroxisomal docking factor that anchors PEX1 and PEX6 to peroxisome membranes. PEX26 is therefore required for the formation of the PEX1-PEX6 AAA ATPase complex, a complex that mediates the extraction of the PEX5 receptor from peroxisomal membrane. The polypeptide is Peroxisomal membrane protein PEX15 (PEX15) (Saccharomyces cerevisiae (strain ATCC 204508 / S288c) (Baker's yeast)).